The chain runs to 527 residues: Catalase (527 aa).

Position 2 is an N-acetylalanine (A2). S9 carries the phosphoserine modification. Catalysis depends on residues H75 and N148. Residues H194, S201, R203, and N213 each coordinate NADP(+). K221 carries the N6-succinyllysine modification. K233 carries the post-translational modification N6-acetyllysine. K237, W303, H305, and K306 together coordinate NADP(+). The residue at position 306 (K306) is an N6-acetyllysine; alternate. An N6-succinyllysine; alternate modification is found at K306. Residue Y358 coordinates heme. Residues S417 and S422 each carry the phosphoserine modification. N6-acetyllysine; alternate is present on K480. K480 carries the post-translational modification N6-succinyllysine; alternate. K499 is subject to N6-acetyllysine. Position 511 is a phosphothreonine (T511). Residues S515 and S517 each carry the phosphoserine modification. The short motif at 524–527 (KANL) is the Microbody targeting signal; atypical element.

It belongs to the catalase family. As to quaternary structure, homotetramer. Interacts (via microbody targeting signal) with PEX5, monomeric form interacts with PEX5, leading to its translocation into peroxisomes. Requires heme as cofactor. NADP(+) is required as a cofactor.

The protein localises to the peroxisome matrix. It carries out the reaction 2 H2O2 = O2 + 2 H2O. In terms of biological role, catalyzes the degradation of hydrogen peroxide (H(2)O(2)) generated by peroxisomal oxidases to water and oxygen, thereby protecting cells from the toxic effects of hydrogen peroxide. Promotes growth of cells including T-cells, B-cells, myeloid leukemia cells, melanoma cells, mastocytoma cells and normal and transformed fibroblast cells. This is Catalase (CAT) from Homo sapiens (Human).